The sequence spans 316 residues: Probable 5-dehydro-4-deoxyglucarate dehydratase (316 aa).

It belongs to the DapA family.

The enzyme catalyses 5-dehydro-4-deoxy-D-glucarate + H(+) = 2,5-dioxopentanoate + CO2 + H2O. It functions in the pathway carbohydrate acid metabolism; D-glucarate degradation; 2,5-dioxopentanoate from D-glucarate: step 2/2. The chain is Probable 5-dehydro-4-deoxyglucarate dehydratase from Corynebacterium glutamicum (strain ATCC 13032 / DSM 20300 / JCM 1318 / BCRC 11384 / CCUG 27702 / LMG 3730 / NBRC 12168 / NCIMB 10025 / NRRL B-2784 / 534).